Consider the following 3163-residue polypeptide: MAAVTFASAITNAITNKTTSTGMVQFGSFPPMPLRSTTVTTVATPVGQPKLYTVRFGSLDPVIVKGGAGSLAKATRQQPSVEIDVSLSEAAALEVAKPKSSAVLRMHEEANKERALFLDWEASLKRRSYGIAENEKVVMTTRGVSKIVPRSSRAMKQKRARERRRAQQPIILKWEPKLSGFSIGGGFSASAIEAEEVRTKWPLHKTPSMKKRMVHKTCKMSDQGVDMLIRSLVKIFKAKSANIEYIGKKPIKVDFIRKERTKFARIQVAHLLGKRAQRDLLAGMEENHFIDILSEYSGNGTTINPGVVCAGWSGIVVRNETLTQKRSRSPSKAFVIRGEHEDKLYDARIKITKTMSLKIVHFSARGANFWKGFDRCFLAYRSDNREHTCYSGLDVTECGEVAALMCLAMFPCGKITCPDCVIDSELSQGQASGPSMKHRLTQLRDVIKSSYPRFKHAVQILDRYEQSLSSANENYQDFAEIQSISDGVEKAAFPHVNKLNAILIKGATATGEEFSQATKHLLEIARYLKNRTENIEKGSLKSFRNKVSQKAHINPTLMCDNQLDKNGNFIWGERGYHAKRFFSNYFEIIDPKKGYTQYETRVVPNGSRKLAIGKLIVPTNFEVLREQMRGEPVEPYPVTVECVSKSQGDFVHACCCVTTESGDPVLSEIKMPTKHHLVIGNSGDPKYIDLPEIEENKMYIAKEGYCYINIFLAMLVNVKESQAKEFTKVVRDKLVSELGKWPTLLDVATACYFLKVFYPDVANAELPRMLVDHKTKIIHVVDSYGSLSTGYHVLKTNTVEQLIKFTRCNLESSLKHYRVGGTEWENAHGADNIDNPQWCIKRLVKGVYRPKQLKEDMLANPFLPLYALLSPGVILAFYNSGSLEHLMNHYISADSNVAVLLVVLKSLAKKVSTSQSVLAQLQIIERSLPELIEAKANINGPDDAATRACNRFMGMLLHMAEPNYELANGGYTFLRDHSISILEKSYLQILDEAWNELSWSERCVIRYYPSKQAIFTQKDLPMQSEADLGGRYSESVISSYEWSKQQAKGVKDSVVNKLRSSMSWTSSKVSNSVCRTINYLVPDVFKFMNVLVCISLLIKMTAEANHIITTQRRLKLDIEETERKKIEWELAFHHNILTHSASQHPTLDEFTAYIAEKAPHLSEHIEPEEKEVVHQAKRQSEQELERVIAFVALVLMMFDAERSDCVTKILNKLKGLVATVEPTVYHQTLNEIEDDLNERNLFVDFELSSDSEMLQQLPAEKTFASWWSHQLSRGFTIPHYRTEGKFMTFTRATATEVAGKIAHESDKDILLMGAVGSGKSTGLPYHLSRKGNVLLLEPTRPLAENVHKQLSQAPFHQNTTLRMRGLTAFGSAPISVMTSGFALNYFANNRSRIEEFDFVIFDECHVHDANAMAMRCLIHECDYSGKIIKVSATPPGREVEFSTQYPVSISTEDTLSFQDFVNAQGSGSNCDVISKGDNILVYVASYNEVDTLSKLLIERDFKVTKVDGRTMKVGNIEITTSGTPSRKHFIVATNIIENGVTLDIDVVADFGTKVLPYLDTDNRMLSTTKTSINYGERIQRLGRVGRHKPGHALRIGHTERGLSEVPSCIATEAALKCFTYGLPVITNNVSTSILGNVTVKQARTMSVFEITPFYTSQVVRYDGSMHPQVHALLKRFKLRDSEIVLTKLAIPNRGVNAGSQPVSMHDSVQMLKIGVTLRIPFMCRDIPEKLHLDMWDVVVKFKGDAGFGRLSSSASKVAYTLQTDVNSIQRTVTIIDTLIAEERRKQEYFKTVTSNCVSSSNFSLQSITNAIKSRMMKDHPCENISVLEGAKSQLLEFRNLNSDHSFVTKTDGISRSFMRDYGALEAVNHQSTNEMSKFLQLKGKWNKTLITRDVLVICGVLGGGVWMVVQHFRSKVSEPVTHEAKGKKQRQKLKFRNARDNKMGREVYGDDDTIEHFFGDAYTKKGKSKGRTRGIGHKNRKFINMYGFDPEDFSAVRFVDPLTGATLDDNPFTDITLVQKHFGDIRMDLLGEDELDSNEIRMNKTIQAYYMNNKTGKALKVDLTPHIPLKVCDLHATIAGFPERENELRQTGKAQPINIDEVPRANNELVPVDHESNSMFRGLRDYNPISNNICHLTNVSDGASNSLYGVGFGPLILTNRHLFERNNGELIIKSRHGEFVIKNTTQLHLLPIPDRDLLLIRLPKDVPPFPQKLGFRQPEKGERICMVGSNFQTKSITSIVSETSTIMPVENSQFWKHWISTKDGQCGSPMVSTKDGKILGLHSLANFQNSINYFAAFPDDFTEKYLHTIEAHEWVKHWKYNTSAISWGSLNIQASQPVSLFKVSKLISDLDSTAVYAQTQQNRWMFEQLTGNLKAIAHCPSQLVTKHTVKGKCQMFDLYLKLHDEAREYFQPMLGQYQKSKLNREAYAKDLLKYATPIEAGNIDCDLFEKTVEIVISDLRGYGFETCNYVTDENDIFEALNMKSAVGALYKGKKKDYFAEFTPEVKEEILKQSCERLFLGKMGVWNGSLKAELRPLEKVEANKTRTFTAAPLDTLLGGKVCVDDFNNQFYDHNLRAPWDVGMTKFYCGWDRLLESLPDGWVYCDADGSQFDSSLSPYLINAVLNIRLGFMEEWDVGEVMLRNLYTEIVYTPISTPDGTLVKKFKGNNSGQPSTVVDNTLMVILAVNYSLKKGGIPSELRDSIIRFFVNGDDLLLSVHPEYEYILDTMADNFRELGLKYTFDSRTREKGDLWFMSHQGHRREGIWIPKLEPERIVSILEWDRSKEPCHRLEAICAAMIESWGYDKLTHEIRKFYAWMIEQAPFSSLAQEGKAPYIAETALRKLYLDKEPAQEDLTQYLQAIFEDYEDGVEACVYHQAGETLDADLTEEQKQAEKEKKEREKAEKERERQKQLAFKKGKDVAQEEGKRDKEVNAGTSGTFSVPRLKSLTSKMRVPRYEKRVALNLDHLILYTPEQTDLSNTRSTRKQFDTWFEGVMADYELTEDKMQIILNGLRVWCIENGTSPNINGMWVMMDGDDQVEFPIKPLIDHAKPTFRQIMAHFSDVAEAYIEKRNQDRPYMPRYGLQRNLTDMSLARYAFDFYEMTSRTPIRAREAHIQMKAAALRGANNNLFGLDGNVGTTVENTERHTTEDVNRNMHNLLGVQGL.

Residues 219-362 form the Peptidase S30 domain; the sequence is KMSDQGVDML…KTMSLKIVHF (144 aa). Residues H270, D279, and S313 each act as for P1 proteinase activity in the active site. Residues 414–417 carry the Involved in interaction with stylet and aphid transmission motif; sequence KITC. Positions 672-674 match the Involved in virions binding and aphid transmission motif; it reads PTK. The Peptidase C6 domain occupies 698 to 820; the sequence is MYIAKEGYCY…ESSLKHYRVG (123 aa). Catalysis depends on for helper component proteinase activity residues C706 and H779. In terms of domain architecture, Helicase ATP-binding spans 1300–1452; the sequence is KIAHESDKDI…TQYPVSISTE (153 aa). Residue 1313–1320 participates in ATP binding; the sequence is GAVGSGKS. The DEAH box motif lies at 1402–1405; the sequence is DECH. One can recognise a Helicase C-terminal domain in the interval 1471-1630; that stretch reads DVISKGDNIL…GLPVITNNVS (160 aa). Topologically, residues 1871–1888 are cytoplasmic; that stretch reads STNEMSKFLQLKGKWNKT. Residues 1889–1909 form a helical membrane-spanning segment; it reads LITRDVLVICGVLGGGVWMVV. Topologically, residues 1910 to 1923 are lumenal; it reads QHFRSKVSEPVTHE. The short motif at 1964–1971 is the Nuclear localization signal element; it reads KKGKSKGR. The tract at residues 1983–2017 is binding to host eIF(iso)4E; it reads INMYGFDPEDFSAVRFVDPLTGATLDDNPFTDITL. Residue Y1986 is modified to O-(5'-phospho-RNA)-tyrosine. The 219-residue stretch at 2116–2334 folds into the Peptidase C4 domain; it reads SNSMFRGLRD…ISWGSLNIQA (219 aa). Residues H2161, D2196, and C2266 each act as for nuclear inclusion protein A activity in the active site. The RdRp catalytic domain maps to 2600–2724; the sequence is WVYCDADGSQ…SVHPEYEYIL (125 aa). Residues 2883–2934 are disordered; that stretch reads DLTEEQKQAEKEKKEREKAEKERERQKQLAFKKGKDVAQEEGKRDKEVNAGT. Positions 2886–2930 are enriched in basic and acidic residues; that stretch reads EEQKQAEKEKKEREKAEKERERQKQLAFKKGKDVAQEEGKRDKEV.

Belongs to the potyviridae genome polyprotein family. As to quaternary structure, interacts with host eIF4E protein (via cap-binding region); this interaction mediates the translation of the VPg-viral RNA conjugates. Part of a complex that comprises VPg, RNA, host EIF4E and EIF4G; this interaction mediates the translation of the VPg-viral RNA conjugates. In terms of assembly, interacts, via N-terminal region, with host Sec24a protein in COPII-coated vesicles. This binding triggers the formation of host endoplasmic reticulum (ER)-derived viral vesicles involved in cell-to-cell viral movement. VPg is uridylylated by the polymerase and is covalently attached to the 5'-end of the genomic RNA. This uridylylated form acts as a nucleotide-peptide primer for the polymerase. In terms of processing, potyviral RNA is expressed as two polyproteins which undergo post-translational proteolytic processing. Genome polyprotein is processed by NIa-pro, P1 and HC-pro proteinases resulting in the production of at least ten individual proteins. P3N-PIPO polyprotein is cleaved by P1 and HC-pro proteinases resulting in the production of three individual proteins. The P1 proteinase and the HC-pro cleave only their respective C-termini autocatalytically. 6K1 is essential for proper proteolytic separation of P3 from CI.

It localises to the host cytoplasm. Its subcellular location is the host nucleus. The protein resides in the host cytoplasmic vesicle. The protein localises to the host membrane. It is found in the virion. The catalysed reaction is RNA(n) + a ribonucleoside 5'-triphosphate = RNA(n+1) + diphosphate. The enzyme catalyses Hydrolyzes glutaminyl bonds, and activity is further restricted by preferences for the amino acids in P6 - P1' that vary with the species of potyvirus, e.g. Glu-Xaa-Xaa-Tyr-Xaa-Gln-|-(Ser or Gly) for the enzyme from tobacco etch virus. The natural substrate is the viral polyprotein, but other proteins and oligopeptides containing the appropriate consensus sequence are also cleaved.. It catalyses the reaction Hydrolyzes a Gly-|-Gly bond at its own C-terminus, commonly in the sequence -Tyr-Xaa-Val-Gly-|-Gly, in the processing of the potyviral polyprotein.. In terms of biological role, cysteine protease that cleaves a Gly-Gly dipeptide at its own C-terminus. Required for aphid transmission and also has proteolytic activity. Interacts with virions and aphid stylets. Acts as a suppressor of RNA-mediated gene silencing, also known as post-transcriptional gene silencing (PTGS), a mechanism of plant viral defense that limits the accumulation of viral RNAs. May have RNA-binding activity. Functionally, has helicase activity. It may be involved in replication. Its function is as follows. Indispensable for virus replication. Responsible for the formation of peripheral motile host endoplasmic reticulum (ER)-derived viral vesicles called 'viral factories', seat of the viral RNA (vRNA) replication and carrying vRNA to plasmodesmata for delivery into adjacent non-infected cells; this process relies on host Sec24a-binding. In terms of biological role, mediates the cap-independent, EIF4E-dependent translation of viral genomic RNAs. Binds to the cap-binding site of host EIF4E and thus interferes with the host EIF4E-dependent mRNA export and translation. VPg-RNA directly binds EIF4E and is a template for transcription. Also forms trimeric complexes with EIF4E-EIF4G, which are templates for translation. Functionally, has RNA-binding and proteolytic activities. Its function is as follows. RNA-dependent RNA polymerase that ensures transcription and replication of viral RNA (vRNA). Involved in aphid transmission, cell-to-cell and systemis movement, encapsidation of the viral RNA and in the regulation of viral RNA amplification. The polypeptide is Genome polyprotein (Brassica (TuMV)).